Reading from the N-terminus, the 382-residue chain is Gap junction alpha-1 protein (382 aa).

Residues 2–23 (GDWSALGKLLDKVQAYSTAGGK) lie on the Cytoplasmic side of the membrane. Residue S5 is modified to Phosphoserine. A helical transmembrane segment spans residues 24–44 (VWLSVLFIFRILLLGTAVESA). The Extracellular portion of the chain corresponds to 45 to 76 (WGDEQSAFRCNTQQPGCENVCYDKSFPISHVR). Intrachain disulfides connect C54-C192 and C187-C198. The chain crosses the membrane as a helical span at residues 77–97 (FWVLQIIFVSVPTLLYLAHVF). The Cytoplasmic portion of the chain corresponds to 98 to 155 (YVMRKEEKLNKKEEELKVAQTDGVNVEMHLKQIEIKKFKYGIEEHGKVKMRGGLLRTY). Residue K144 forms a Glycyl lysine isopeptide (Lys-Gly) (interchain with G-Cter in SUMO) linkage. The chain crosses the membrane as a helical span at residues 156-176 (IISILFKSIFEVAFLLIQWYI). The Extracellular portion of the chain corresponds to 177–207 (YGFSLSAVYTCKRDPCPHQVDCFLSRPTEKT). The helical transmembrane segment at 208-228 (IFIIFMLVVSLVSLALNIIEL) threads the bilayer. Topologically, residues 229–382 (FYVFFKGVKD…SRPRPDDLEI (154 aa)) are cytoplasmic. K237 is covalently cross-linked (Glycyl lysine isopeptide (Lys-Gly) (interchain with G-Cter in SUMO)). The interval 244-382 (SDPYHATSGA…SRPRPDDLEI (139 aa)) is interaction with NOV. A Phosphotyrosine modification is found at Y247. S255 and S262 each carry phosphoserine. Positions 264–382 (KYAYFNGCSS…SRPRPDDLEI (119 aa)) are interaction with UBQLN4. C271 is modified (S-nitrosocysteine). Residue T275 is modified to Phosphothreonine. Residues 279–300 (SPMSPPGYKPVTGDRNNSSCRN) form a disordered region. 2 positions are modified to phosphoserine: S306 and S314. Polar residues predominate over residues 317–332 (QNRMGQAGSTISNSHA). The tract at residues 317–382 (QNRMGQAGST…SRPRPDDLEI (66 aa)) is disordered. Residue S325 is modified to Phosphoserine; by CK1. Residue T326 is modified to Phosphothreonine. S328 and S330 each carry phosphoserine; by CK1. Residues S344 and S365 each carry the phosphoserine modification. Residues 362 to 374 (RPSSRASSRASSR) are compositionally biased toward low complexity. S368 bears the Phosphoserine; by PKC/PRKCG and PKC/PRKCD mark. Residues S369 and S373 each carry the phosphoserine modification.

Belongs to the connexin family. Alpha-type (group II) subfamily. A connexon is composed of a hexamer of connexins. Interacts with SGSM3. Interacts with RIC1/CIP150. Interacts with CNST and CSNK1D. Interacts (via C-terminus) with TJP1. Interacts (via C-terminus) with SRC (via SH3 domain). Interacts (not ubiquitinated) with UBQLN4 (via UBA domain). Interacts with NOV. Interacts with TMEM65. Interacts with ANK3/ANKG and PKP2. Post-translationally, phosphorylation at Ser-325, Ser-328 and Ser-330 by CK1 modulates gap junction assembly. Phosphorylated at Ser-368 by PRKCG; phosphorylation induces disassembly of gap junction plaques and inhibition of gap junction activity. Phosphorylation at Ser-368 by PRKCD triggers its internalization into small vesicles leading to proteasome-mediated degradation. In terms of processing, sumoylated with SUMO1, SUMO2 and SUMO3, which may regulate the level of functional Cx43 gap junctions at the plasma membrane. May be desumoylated by SENP1 or SENP2. S-nitrosylation at Cys-271 is enriched at the muscle endothelial gap junction in arteries, it augments channel permeability and may regulate of smooth muscle cell to endothelial cell communication. Post-translationally, acetylated in the developing cortex; leading to delocalization from the cell membrane.

The protein localises to the cell membrane. It is found in the cell junction. Its subcellular location is the gap junction. It localises to the endoplasmic reticulum. In terms of biological role, gap junction protein that acts as a regulator of bladder capacity. A gap junction consists of a cluster of closely packed pairs of transmembrane channels, the connexons, through which materials of low MW diffuse from one cell to a neighboring cell. May play a critical role in the physiology of hearing by participating in the recycling of potassium to the cochlear endolymph. Negative regulator of bladder functional capacity: acts by enhancing intercellular electrical and chemical transmission, thus sensitizing bladder muscles to cholinergic neural stimuli and causing them to contract. May play a role in cell growth inhibition through the regulation of NOV expression and localization. Plays an essential role in gap junction communication in the ventricles. This Macaca fascicularis (Crab-eating macaque) protein is Gap junction alpha-1 protein (GJA1).